The following is an 811-amino-acid chain: Auxin response factor 8 (811 aa).

The TF-B3 DNA-binding region spans 126–228; the sequence is FCKTLTASDT…QLFLGIRHAT (103 aa). Disordered regions lie at residues 467–496 and 544–565; these read HQYLQQSASHNSDLMLQQQQQQQASRHLMH and HLQQWQQQSEMPSPSFMKSDFT. 2 stretches are compositionally biased toward polar residues: residues 469 to 482 and 544 to 555; these read YLQQSASHNSDLML and HLQQWQQQSEMP. The PB1 domain occupies 705-789; the sequence is KNFVKVYKSG…WYIKILSPED (85 aa).

The protein belongs to the ARF family. As to quaternary structure, homodimers and heterodimers. Expressed in the whole plant.

It localises to the nucleus. Its function is as follows. Auxin response factors (ARFs) are transcriptional factors that bind specifically to the DNA sequence 5'-TGTCTC-3' found in the auxin-responsive promoter elements (AuxREs). Seems to act as transcriptional activator. Formation of heterodimers with Aux/IAA proteins may alter their ability to modulate early auxin response genes expression. Regulates both stamen and gynoecium maturation. Promotes jasmonic acid production. Partially redundant with ARF6. Involved in fruit initiation. Acts as an inhibitor to stop further carpel development in the absence of fertilization and the generation of signals required to initiate fruit and seed development. The chain is Auxin response factor 8 (ARF8) from Arabidopsis thaliana (Mouse-ear cress).